A 286-amino-acid polypeptide reads, in one-letter code: Sulfate transport system permease protein CysT (286 aa).

The next 7 membrane-spanning stretches (helical) occupy residues 27–47 (WVVT…ALLV), 74–94 (FITA…VAWV), 108–128 (AMVD…LATL), 146–166 (IAFS…PFIV), 195–215 (FWRV…ALGF), 224–244 (SVVL…VLVF), and 257–276 (VIGA…INLL). The region spanning 70–273 (YNVTFITALA…SVSLILLLII (204 aa)) is the ABC transmembrane type-1 domain.

It belongs to the binding-protein-dependent transport system permease family. CysTW subfamily. The complex is composed of two ATP-binding proteins (CysA), two transmembrane proteins (CysT and CysW) and a solute-binding protein (CysP).

The protein resides in the cell inner membrane. Its function is as follows. Part of the ABC transporter complex CysAWTP (TC 3.A.1.6.1) involved in sulfate/thiosulfate import. Probably responsible for the translocation of the substrate across the membrane. The polypeptide is Sulfate transport system permease protein CysT (cysT) (Synechocystis sp. (strain ATCC 27184 / PCC 6803 / Kazusa)).